The primary structure comprises 85 residues: Putative membrane protein insertion efficiency factor (85 aa).

The interval K62–H85 is disordered.

The protein belongs to the UPF0161 family.

Its subcellular location is the cell membrane. Its function is as follows. Could be involved in insertion of integral membrane proteins into the membrane. The chain is Putative membrane protein insertion efficiency factor from Staphylococcus aureus (strain Mu3 / ATCC 700698).